A 379-amino-acid polypeptide reads, in one-letter code: Glutamate 5-kinase (379 aa).

An ATP-binding site is contributed by Lys15. Substrate-binding residues include Ser54, Asp144, and Asn156. ATP is bound at residue 176 to 177 (TD). One can recognise a PUA domain in the interval 282 to 360 (KGVILVDAGA…GEIERALGYK (79 aa)).

This sequence belongs to the glutamate 5-kinase family.

It is found in the cytoplasm. It carries out the reaction L-glutamate + ATP = L-glutamyl 5-phosphate + ADP. The protein operates within amino-acid biosynthesis; L-proline biosynthesis; L-glutamate 5-semialdehyde from L-glutamate: step 1/2. Its function is as follows. Catalyzes the transfer of a phosphate group to glutamate to form L-glutamate 5-phosphate. The protein is Glutamate 5-kinase of Anaeromyxobacter dehalogenans (strain 2CP-C).